Consider the following 255-residue polypeptide: Glycerol-3-phosphate regulon repressor (255 aa).

The HTH deoR-type domain maps to 3–58; it reads QSLRHQKIIKLVEQSGYLSTEELVAALDVSPQTIRRDLNILAELDLIRRHHGGAAS. Positions 20–39 form a DNA-binding region, H-T-H motif; it reads LSTEELVAALDVSPQTIRRD.

Repressor of the glycerol-3-phosphate regulon. The polypeptide is Glycerol-3-phosphate regulon repressor (glpR) (Haemophilus influenzae (strain ATCC 51907 / DSM 11121 / KW20 / Rd)).